The chain runs to 80 residues: Omega-conotoxin-like 2/7 (80 aa).

The N-terminal stretch at 1-22 (MKLTCMMIVAVMFLTASIFITA) is a signal peptide. A propeptide spanning residues 23–51 (DNSRNGIENLPRMRRHEMKKPKASKLNKR) is cleaved from the precursor. 3 disulfide bridges follow: Cys-53-Cys-71, Cys-60-Cys-75, and Cys-70-Cys-79.

The protein belongs to the conotoxin O1 superfamily. Expressed by the venom duct.

It is found in the secreted. Omega-conotoxins act at presynaptic membranes, they bind and block voltage-gated calcium channels (Cav). The chain is Omega-conotoxin-like 2/7 from Conus imperialis (Imperial cone).